Reading from the N-terminus, the 160-residue chain is SsrA-binding protein (160 aa).

The protein belongs to the SmpB family.

The protein localises to the cytoplasm. Functionally, required for rescue of stalled ribosomes mediated by trans-translation. Binds to transfer-messenger RNA (tmRNA), required for stable association of tmRNA with ribosomes. tmRNA and SmpB together mimic tRNA shape, replacing the anticodon stem-loop with SmpB. tmRNA is encoded by the ssrA gene; the 2 termini fold to resemble tRNA(Ala) and it encodes a 'tag peptide', a short internal open reading frame. During trans-translation Ala-aminoacylated tmRNA acts like a tRNA, entering the A-site of stalled ribosomes, displacing the stalled mRNA. The ribosome then switches to translate the ORF on the tmRNA; the nascent peptide is terminated with the 'tag peptide' encoded by the tmRNA and targeted for degradation. The ribosome is freed to recommence translation, which seems to be the essential function of trans-translation. The sequence is that of SsrA-binding protein from Cronobacter sakazakii (strain ATCC BAA-894) (Enterobacter sakazakii).